The sequence spans 166 residues: Putative 4-hydroxy-4-methyl-2-oxoglutarate aldolase 3 (166 aa).

Alanine 2 is subject to N-acetylalanine. Substrate contacts are provided by residues 81–84 (GGNL) and arginine 103. Residue aspartate 104 participates in a divalent metal cation binding.

Belongs to the class II aldolase/RraA-like family. As to quaternary structure, homotrimer. A divalent metal cation serves as cofactor.

It carries out the reaction 4-hydroxy-4-methyl-2-oxoglutarate = 2 pyruvate. The enzyme catalyses oxaloacetate + H(+) = pyruvate + CO2. In terms of biological role, catalyzes the aldol cleavage of 4-hydroxy-4-methyl-2-oxoglutarate (HMG) into 2 molecules of pyruvate. Also contains a secondary oxaloacetate (OAA) decarboxylase activity due to the common pyruvate enolate transition state formed following C-C bond cleavage in the retro-aldol and decarboxylation reactions. This Arabidopsis thaliana (Mouse-ear cress) protein is Putative 4-hydroxy-4-methyl-2-oxoglutarate aldolase 3.